A 593-amino-acid chain; its full sequence is MRDSTGAGNSLVHKRSPLRRNQKTPTSLTKLSLQDGHKAKKPACKFEEGQDVLARWSDGLFYLGTIKKINILKQSCFIIFEDSSKSWVLWKDIQTGATGSGEMVCTICQEEYSEAPNEMVICDKCGQGYHQLCHTPHIDSSVIDSDEKWLCRQCVFATTTKRGGALKKGPNAKALQVMKQTLPYSVADLEWDAGHKTNVQQCYCYCGGPGDWYLKMLQCCKCKQWFHEACVQCLQKPMLFGDRFYTFICSVCSSGPEYLKRLPLQWVDIAHLCLYNLSVIHKKKYFDSELELMTYINENWDRLHPGELADTPKSERYEHVLEALNDYKTMFMSGKEIKKKKHLFGLRIRVPPVPPNVAFKAEKEPEGTSHEFKIKGRKASKPISDSREVSNGIEKKGKKKSVGRPPGPYTRKMIQKTAEPLLDKESISENPTLDLPCSIGRTEGTAHSSNTSDVDFTGASSAKETTSSSISRHYGLSDSRKRTRTGRSWPAAIPHLRRRRGRLPRRALQTQNSEIVKDDEGKEDYQFDELNTEILNNLADQELQLNHLKNSITSYFGAAGRIACGEKYRVLARRVTLDGKVQYLVEWEGATAS.

Residues Met1–Asp35 form a disordered region. Residues Val12–Gln22 show a composition bias toward basic residues. Residues Lys23–Ser32 show a composition bias toward polar residues. Thr24 is modified (phosphothreonine). The Tudor domain occupies Cys44–Gly101. 2 PHD-type zinc fingers span residues Glu102 to Ala157 and Gln201 to Gly255. Lys360 participates in a covalent cross-link: Glycyl lysine isopeptide (Lys-Gly) (interchain with G-Cter in SUMO2). The span at Lys360–Ile374 shows a compositional bias: basic and acidic residues. Disordered regions lie at residues Lys360–Arg411 and Lys424–Gly486. A compositionally biased stretch (polar residues) spans Thr445–Val454. Residue Ser452 is modified to Phosphoserine. Residues Ala459–Ser471 show a composition bias toward low complexity. Residue Lys522 forms a Glycyl lysine isopeptide (Lys-Gly) (interchain with G-Cter in SUMO2) linkage.

Belongs to the Polycomblike family. Associates with the PRC2 complex, which consists of the core components EED, EZH1 or EZH2, SUZ12, and RBBP4, and various combinations of accessory subunits including AEBP2, JARID2, PHF19, MTF2 and EPOP. Forms a dimeric PRC2.1 (class 1, PRC-PCL) complex consisting of at least SUZ12, RBBP4, and PHF19 or MTF2; PHF19 and MTF2 stabilize the dimeric structure which enhances PRC2 interaction with chromatin.

It is found in the nucleus. Its function is as follows. Polycomb group (PcG) protein that specifically binds histone H3 trimethylated at 'Lys-36' (H3K36me3) and recruits the PRC2 complex, thus enhancing PRC2 H3K27me3 methylation activity. Regulates the transcriptional networks during embryonic stem cell self-renewal and differentiation. Promotes recruitment of the PRC2 complex to the inactive X chromosome in differentiating XX ES cells and PRC2 recruitment to target genes in undifferentiated ES cells. Required to repress Hox genes by enhancing H3K27me3 methylation of the PRC2 complex. In some conditions may act as an inhibitor of PRC2 activity: able to activate the CDKN2A gene and promote cellular senescence by suppressing the catalytic activity of the PRC2 complex locally. Binds to the metal-regulating-element (MRE) of MT1A gene promoter. The polypeptide is Metal-response element-binding transcription factor 2 (MTF2) (Homo sapiens (Human)).